A 311-amino-acid chain; its full sequence is NEDD4 family-interacting protein 2 (311 aa).

The segment at 1-133 is disordered; sequence RRSASDAELS…PPYSSITVEA (133 aa). At 1–206 the chain is on the cytoplasmic side; sequence RRSASDAELS…VEQLRVGNDG (206 aa). Positions 7–22 are enriched in low complexity; sequence AELSAGAEGATGSEAA. Residues 26 to 37 are compositionally biased toward gly residues; the sequence is DLGGRTRGGGRG. The span at 38–47 shows a compositional bias: low complexity; sequence SAAAAATTST. Residues 48 to 75 are compositionally biased toward basic and acidic residues; the sequence is REAEGAERRGDTPARKPDPEAGRMDHHQ. The segment covering 92-101 has biased composition (polar residues); it reads ESSAVEQPST. Low complexity predominate over residues 102–120; it reads SSLAAPTVEAAASAPALDP. The tract at residues 123-126 is interaction with NEDD4; it reads PPPY. The PPxY motif 1 motif lies at 123–126; sequence PPPY. A phosphotyrosine; by SRC mark is found at Y126, Y142, Y146, and Y152. 2 short sequence motifs (PPxY motif) span residues 149 to 152 and 159 to 161; these read PPPY and PTY. The helical transmembrane segment at 207 to 227 threads the bilayer; the sequence is IFMLAFFMAFIFNWLGFCLSF. Residues 228–232 are Extracellular-facing; it reads CITNT. A helical transmembrane segment spans residues 233–253; that stretch reads IAGRYGAICGFGLSLIKWILI. At 254 to 262 the chain is on the cytoplasmic side; it reads VRFSDYFTG. A helical transmembrane segment spans residues 263–283; that stretch reads YFNGQYWLWWIFLVLGLLLFF. Residues 284–311 are Extracellular-facing; sequence RGFVNYLKVRNMSESMAAAHRTRYFFLL.

As to quaternary structure, forms heterodimers with NDFIP1. Interacts with HECT domain-containing E3 ubiquitin-protein ligases, including NEDD4. Interacts with NEDD4L. When phosphorylated at Tyr-142, interacts with SRC and LYN SH2 domain. May thus act as a scaffold that recruits SRC to NDFIP1, enhancing NDFIP1 phosphorylation. Interacts with SLC11A2/DMT1. May interact with phosphorylated EGFR. Interacts with KCNH2. In terms of processing, ubiquitinated by NEDD4 and NEDD4L; which does not affect turnover. Also ubiquitinated by ITCH. Undergoes transient tyrosine-phosphorylation following EGF stimulation, most probably catalyzed by SRC. Phosphorylation on Tyr-126, Tyr-146 and Tyr-152 are dependent on the phosphorylation on Tyr-142. Also phosphorylated by LYN and FYN. In terms of tissue distribution, ubiquitously expressed, with highest levels in brain, liver, kidney and testis.

Its subcellular location is the endosome membrane. The protein resides in the golgi apparatus membrane. The protein localises to the endosome. It localises to the multivesicular body membrane. Functionally, activates HECT domain-containing E3 ubiquitin-protein ligases, including ITCH, NEDD4, NEDD4L, SMURF2, WWP1 and WWP2, and consequently modulates the stability of their targets. As a result, may control many cellular processes. Recruits ITCH, NEDD4 and SMURF2 to endosomal membranes. Negatively regulates KCNH2 potassium channel activity by decreasing its cell-surface expression and interfering with channel maturation through recruitment of NEDD4L to the Golgi apparatus and multivesicular body where it mediates KCNH2 degradation. May modulate EGFR signaling. Together with NDFIP1, limits the cytokine signaling and expansion of effector Th2 T-cells by promoting degradation of JAK1, probably by ITCH- and NEDD4L-mediated ubiquitination. This Mus musculus (Mouse) protein is NEDD4 family-interacting protein 2 (Ndfip2).